The following is a 296-amino-acid chain: tRNA dimethylallyltransferase (296 aa).

8-15 (GPTGSGKT) serves as a coordination point for ATP. 10–15 (TGSGKT) contributes to the substrate binding site. Positions 32-35 (DSRQ) are interaction with substrate tRNA.

It belongs to the IPP transferase family. Monomer. It depends on Mg(2+) as a cofactor.

The enzyme catalyses adenosine(37) in tRNA + dimethylallyl diphosphate = N(6)-dimethylallyladenosine(37) in tRNA + diphosphate. Functionally, catalyzes the transfer of a dimethylallyl group onto the adenine at position 37 in tRNAs that read codons beginning with uridine, leading to the formation of N6-(dimethylallyl)adenosine (i(6)A). The sequence is that of tRNA dimethylallyltransferase from Leptospira biflexa serovar Patoc (strain Patoc 1 / Ames).